The primary structure comprises 347 residues: Phosphoribosylformylglycinamidine cyclo-ligase (347 aa).

This sequence belongs to the AIR synthase family.

It is found in the cytoplasm. The enzyme catalyses 2-formamido-N(1)-(5-O-phospho-beta-D-ribosyl)acetamidine + ATP = 5-amino-1-(5-phospho-beta-D-ribosyl)imidazole + ADP + phosphate + H(+). The protein operates within purine metabolism; IMP biosynthesis via de novo pathway; 5-amino-1-(5-phospho-D-ribosyl)imidazole from N(2)-formyl-N(1)-(5-phospho-D-ribosyl)glycinamide: step 2/2. The chain is Phosphoribosylformylglycinamidine cyclo-ligase from Alkaliphilus metalliredigens (strain QYMF).